A 423-amino-acid polypeptide reads, in one-letter code: Isovaleryl-CoA dehydrogenase, mitochondrial (423 aa).

The transit peptide at 1–29 (MATATRLLGWRVASWRMRPPPAGFVSQRA) directs the protein to the mitochondrion. An N6-acetyllysine; alternate mark is found at Lys-55, Lys-64, and Lys-75. An N6-succinyllysine; alternate mark is found at Lys-55, Lys-64, and Lys-75. Residues 162–171 (LAMSEPNAGS) and 195–197 (WIT) contribute to the FAD site. Substrate is bound at residue Ser-171. 219 to 220 (SR) contacts substrate. Lys-238 is modified (N6-acetyllysine). N6-acetyllysine; alternate is present on Lys-259. Lys-259 is subject to N6-succinyllysine; alternate. Residues Tyr-274 and 281–284 (DLER) each bind substrate. Glu-283 (proton acceptor) is an active-site residue. Arg-309 is a binding site for FAD. Residue Lys-315 is modified to N6-succinyllysine. Residues Gln-320 and 377-381 (QCFGG) each bind FAD. Position 404 to 405 (404 to 405 (AG)) interacts with substrate. 406–408 (TSE) is an FAD binding site.

Belongs to the acyl-CoA dehydrogenase family. Homotetramer. Requires FAD as cofactor.

The protein resides in the mitochondrion matrix. The enzyme catalyses 3-methylbutanoyl-CoA + oxidized [electron-transfer flavoprotein] + H(+) = 3-methylbut-2-enoyl-CoA + reduced [electron-transfer flavoprotein]. It carries out the reaction pentanoyl-CoA + oxidized [electron-transfer flavoprotein] + H(+) = (2E)-pentenoyl-CoA + reduced [electron-transfer flavoprotein]. It catalyses the reaction hexanoyl-CoA + oxidized [electron-transfer flavoprotein] + H(+) = (2E)-hexenoyl-CoA + reduced [electron-transfer flavoprotein]. The catalysed reaction is butanoyl-CoA + oxidized [electron-transfer flavoprotein] + H(+) = (2E)-butenoyl-CoA + reduced [electron-transfer flavoprotein]. Its pathway is amino-acid degradation; L-leucine degradation; (S)-3-hydroxy-3-methylglutaryl-CoA from 3-isovaleryl-CoA: step 1/3. Its function is as follows. Catalyzes the conversion of isovaleryl-CoA/3-methylbutanoyl-CoA to 3-methylbut-2-enoyl-CoA as an intermediate step in the leucine (Leu) catabolic pathway. To a lesser extent, is also able to catalyze the oxidation of other saturated short-chain acyl-CoA thioesters as pentanoyl-CoA, hexenoyl-CoA and butenoyl-CoA. The polypeptide is Isovaleryl-CoA dehydrogenase, mitochondrial (IVD) (Pongo abelii (Sumatran orangutan)).